Reading from the N-terminus, the 262-residue chain is Phosphonates import ATP-binding protein PhnC (262 aa).

In terms of domain architecture, ABC transporter spans 5–253; it reads IRVEKLAKTF…RFDHLYRSIN (249 aa). 37 to 44 is a binding site for ATP; sequence GPSGSGKS.

Belongs to the ABC transporter superfamily. Phosphonates importer (TC 3.A.1.9.1) family. In terms of assembly, the complex is composed of two ATP-binding proteins (PhnC), two transmembrane proteins (PhnE) and a solute-binding protein (PhnD).

The protein localises to the cell inner membrane. It catalyses the reaction phosphonate(out) + ATP + H2O = phosphonate(in) + ADP + phosphate + H(+). In terms of biological role, part of the ABC transporter complex PhnCDE involved in phosphonates import. Responsible for energy coupling to the transport system. In Shigella boydii serotype 4 (strain Sb227), this protein is Phosphonates import ATP-binding protein PhnC.